We begin with the raw amino-acid sequence, 484 residues long: Protein nucleotidyltransferase YdiU (484 aa).

The ATP site is built by Gly87, Gly89, Arg90, Lys110, Asp122, Gly123, Arg173, and Arg180. Asp249 functions as the Proton acceptor in the catalytic mechanism. The Mg(2+) site is built by Asn250 and Asp259. Asp259 contributes to the ATP binding site. Residues 463–484 (EQEKYAELPPPSDRPYRTFCGT) are disordered.

Belongs to the SELO family. Requires Mg(2+) as cofactor. It depends on Mn(2+) as a cofactor.

It carries out the reaction L-seryl-[protein] + ATP = 3-O-(5'-adenylyl)-L-seryl-[protein] + diphosphate. It catalyses the reaction L-threonyl-[protein] + ATP = 3-O-(5'-adenylyl)-L-threonyl-[protein] + diphosphate. The enzyme catalyses L-tyrosyl-[protein] + ATP = O-(5'-adenylyl)-L-tyrosyl-[protein] + diphosphate. The catalysed reaction is L-histidyl-[protein] + UTP = N(tele)-(5'-uridylyl)-L-histidyl-[protein] + diphosphate. It carries out the reaction L-seryl-[protein] + UTP = O-(5'-uridylyl)-L-seryl-[protein] + diphosphate. It catalyses the reaction L-tyrosyl-[protein] + UTP = O-(5'-uridylyl)-L-tyrosyl-[protein] + diphosphate. Nucleotidyltransferase involved in the post-translational modification of proteins. It can catalyze the addition of adenosine monophosphate (AMP) or uridine monophosphate (UMP) to a protein, resulting in modifications known as AMPylation and UMPylation. This Geobacillus kaustophilus (strain HTA426) protein is Protein nucleotidyltransferase YdiU.